The chain runs to 232 residues: Large ribosomal subunit protein uL1 (232 aa).

This sequence belongs to the universal ribosomal protein uL1 family. Part of the 50S ribosomal subunit.

In terms of biological role, binds directly to 23S rRNA. The L1 stalk is quite mobile in the ribosome, and is involved in E site tRNA release. Functionally, protein L1 is also a translational repressor protein, it controls the translation of the L11 operon by binding to its mRNA. This Stenotrophomonas maltophilia (strain R551-3) protein is Large ribosomal subunit protein uL1.